The primary structure comprises 305 residues: Phosphopantetheine adenylyltransferase (305 aa).

This sequence belongs to the eukaryotic CoaD family.

The protein localises to the cytoplasm. Its subcellular location is the nucleus. The catalysed reaction is (R)-4'-phosphopantetheine + ATP + H(+) = 3'-dephospho-CoA + diphosphate. Its function is as follows. Reversibly transfers an adenylyl group from ATP to 4'-phosphopantetheine, yielding dephospho-CoA (dPCoA) and pyrophosphate. Plays a role in the physiological regulation of the intracellular CoA concentration. This Saccharomyces cerevisiae (strain ATCC 204508 / S288c) (Baker's yeast) protein is Phosphopantetheine adenylyltransferase (CAB4).